A 130-amino-acid chain; its full sequence is Holo-[acyl-carrier-protein] synthase (130 aa).

Mg(2+)-binding residues include D9 and E58.

It belongs to the P-Pant transferase superfamily. AcpS family. Mg(2+) is required as a cofactor.

The protein resides in the cytoplasm. It carries out the reaction apo-[ACP] + CoA = holo-[ACP] + adenosine 3',5'-bisphosphate + H(+). Functionally, transfers the 4'-phosphopantetheine moiety from coenzyme A to a Ser of acyl-carrier-protein. This chain is Holo-[acyl-carrier-protein] synthase, found in Mycobacterium bovis (strain ATCC BAA-935 / AF2122/97).